Consider the following 150-residue polypeptide: Ribonuclease K6 (150 aa).

Residues 1–23 (MVLCFPLLLLLLVLWGPVCLLHA) form the signal peptide. The active-site Proton acceptor is His38. Intrachain disulfides connect Cys46/Cys104, Cys60/Cys114, Cys78/Cys129, and Cys85/Cys92. Asn55 carries N-linked (GlcNAc...) asparagine glycosylation. Residues 61–65 (KHQNT) and Lys86 contribute to the substrate site. Residue Asn100 is glycosylated (N-linked (GlcNAc...) asparagine). Arg105 contacts substrate. The Proton donor role is filled by His145.

It belongs to the pancreatic ribonuclease family. In terms of assembly, interacts (via N-terminus) with bacterial lipopolysaccharide (LPS).

The protein resides in the secreted. The protein localises to the lysosome. Its subcellular location is the cytoplasmic granule. Ribonuclease which shows a preference for the pyrimidines uridine and cytosine. Has potent antibacterial activity against a range of Gram-positive and Gram-negative bacteria, including P.aeruginosa, A.baumanii, M.luteus, S.aureus, E.faecalis, E.faecium, S.saprophyticus and E.coli. Causes loss of bacterial membrane integrity, and also promotes agglutination of Gram-negative bacteria. Probably contributes to urinary tract sterility. Bactericidal activity is independent of RNase activity. This Chlorocebus aethiops (Green monkey) protein is Ribonuclease K6 (RNASE6).